The chain runs to 728 residues: Ribosome biogenesis protein bop1-A (728 aa).

The disordered stretch occupies residues methionine 1–isoleucine 114. Acidic residues predominate over residues serine 55–glutamate 67. The segment covering asparagine 68–isoleucine 77 has biased composition (basic and acidic residues). 7 WD repeats span residues glycine 393–serine 432, valine 434–cysteine 474, lysine 514–proline 556, lysine 559–lysine 597, threonine 600–lysine 639, histidine 643–glutamine 682, and histidine 698–threonine 728.

Belongs to the WD repeat BOP1/ERB1 family. In terms of assembly, component of the PeBoW complex, composed of bop1, pes1 and wdr12. The complex is held together by bop1, which interacts with pes1 via its N-terminal domain and with wdr12 via a high-affinity interaction between the seven-bladed beta-propeller domains of the 2 proteins. The PeBoW complex associates with the 66S pre-ribosome.

The protein localises to the nucleus. It localises to the nucleolus. Its subcellular location is the nucleoplasm. Component of the PeBoW complex, which is required for maturation of 28S and 5.8S ribosomal RNAs and formation of the 60S ribosome. This chain is Ribosome biogenesis protein bop1-A (bop1-a), found in Xenopus laevis (African clawed frog).